A 553-amino-acid chain; its full sequence is MLTDIEIADQAQLTPINEIAAQLGLDEDAIEQYGKYKAKINLPVQATPEKKHKLVLVTSINPTPAGEGKSTVLVGLGDALSLLHHQTVIAMREPSMGPVFGMKGGATGGGYSQVVPMEDINLHFTGDFHALTSANNTLAALIDNYLMRGNELGLDPRRVIWKRVEDVNDRALRDVVTGLGGIMQGVPRQTGFDITPASELMAILCLATDLSDLKARVSRIVVGYTYDKEPVTVGQLGFEEAVTILLKDAIKPNLVQTLGHTPAIVHGGPFANIAHGCNSVLATKTALQLADYTVTEAGFGADLGAEKFLDIKRPVLGKTPDAVVIVATVRALEYNGGASLQALKDENLTELENGLQNLNRHIANMQRYGLPLVVAINHFATDTPAEIKLIEDNCKARGVNVVVADAWAKGGAGTLDLAKEVVALAEQEASFTPLYDYQATPKEKVETIATKVYGAGRVAFSKKALNQLKQFEKLGWNDLPICIAKTQYSFTDDQTQLGAPEGFTFHIREFVPKLGAGFIVALAGNMLTMPGLPKVPAAVKMTIDSEGKITGLF.

63–70 (TPAGEGKS) contributes to the ATP binding site.

The protein belongs to the formate--tetrahydrofolate ligase family.

It carries out the reaction (6S)-5,6,7,8-tetrahydrofolate + formate + ATP = (6R)-10-formyltetrahydrofolate + ADP + phosphate. It functions in the pathway one-carbon metabolism; tetrahydrofolate interconversion. This is Formate--tetrahydrofolate ligase from Limosilactobacillus fermentum (strain NBRC 3956 / LMG 18251) (Lactobacillus fermentum).